A 228-amino-acid chain; its full sequence is PKHD-type hydroxylase XC_1340 (228 aa).

A Fe2OG dioxygenase domain is found at 78–180 (RIYPPLFNRY…RVASFFWIQS (103 aa)). Fe cation is bound by residues His-96, Asp-98, and His-161. Arg-171 lines the 2-oxoglutarate pocket.

The cofactor is Fe(2+). It depends on L-ascorbate as a cofactor.

This Xanthomonas campestris pv. campestris (strain 8004) protein is PKHD-type hydroxylase XC_1340.